The sequence spans 821 residues: Integrator complex assembly factor BRAT1 (821 aa).

Residues 100 to 200 (PGLFGEPGPL…WPACAQKIMD (101 aa)) form a required for interaction with NDFIP1 region. HEAT repeat units lie at residues 495–531 (PQFLRELFPVLQKRLCHPCWEVRDSALEFLTQLSRHW) and 544–576 (SEVPQLALQLLQDPESYVRASAVTAMGQLSSQG). Positions 741–767 (GSPNTASAEATLPRWRAGEQAQPPGDQ) are disordered. Ser-742 carries the phosphoserine modification. A BRAT1-like motif motif is present at residues 819–821 (DCY). Cys-820 contributes to the Zn(2+) binding site.

The protein belongs to the BRAT1 family. As to quaternary structure, part of the multiprotein complex composed of BRAT1, WDR73, as well as integrator complex subunits INTS9 and INTS11. Interacts with BRCA1 and ATM. Interacts with MTOR and RPTOR. Interacts with NDFIP1. Interacts with SMC1A and PRKDC. Post-translationally, ubiquitinated by NEDD4, NEDD4L and ITCH; mono- and polyubiquitinated forms are detected. As to expression, ubiquitously expressed.

Its subcellular location is the nucleus. The protein localises to the cytoplasm. Its function is as follows. Component of a multiprotein complex required for the assembly of the RNA endonuclease module of the integrator complex. Associates with INTS9 and INTS11 in the cytoplasm and blocks the active site of INTS11 to inhibit the endonuclease activity of INTS11 before formation of the full integrator complex. Following dissociation of WDR73 of the complex, BRAT1 facilitates the nuclear import of the INTS9-INTS11 heterodimer. In the nucleus, INTS4 is integrated to the INTS9-INTS11 heterodimer and BRAT1 is released from the mature RNA endonuclease module by inositol hexakisphosphate (InsP6). BRAT1 is also involved in DNA damage response; activates kinases ATM, SMC1A and PRKDC by modulating their phosphorylation status following ionizing radiation (IR) stress. Plays a role in regulating mitochondrial function and cell proliferation. Required for protein stability of MTOR and MTOR-related proteins, and cell cycle progress by growth factors. The polypeptide is Integrator complex assembly factor BRAT1 (Homo sapiens (Human)).